The primary structure comprises 463 residues: uncharacterized protein (463 aa).

Residues 9–67 (VLKKGQRFPLTIKRLGINGEGVGYFKRHVVFVPGALPGEEVVVEVTDVKPRFAEASIRK) form the TRAM domain. [4Fe-4S] cluster is bound by residues Cys-80, Cys-86, Cys-89, and Cys-169. S-adenosyl-L-methionine is bound by residues Gln-293, Tyr-322, Asp-343, and Asp-391. Residue Cys-418 is the Nucleophile of the active site.

This sequence belongs to the class I-like SAM-binding methyltransferase superfamily. RNA M5U methyltransferase family.

This is an uncharacterized protein from Halalkalibacterium halodurans (strain ATCC BAA-125 / DSM 18197 / FERM 7344 / JCM 9153 / C-125) (Bacillus halodurans).